The sequence spans 249 residues: 2,3-bisphosphoglycerate-dependent phosphoglycerate mutase (249 aa).

Substrate is bound by residues R11–N18, T24–G25, R63, E90–Y93, K101, R117–R118, and G184–N185. Residue H12 is the Tele-phosphohistidine intermediate of the active site. Residue E90 is the Proton donor/acceptor of the active site.

Belongs to the phosphoglycerate mutase family. BPG-dependent PGAM subfamily.

The enzyme catalyses (2R)-2-phosphoglycerate = (2R)-3-phosphoglycerate. The protein operates within carbohydrate degradation; glycolysis; pyruvate from D-glyceraldehyde 3-phosphate: step 3/5. Functionally, catalyzes the interconversion of 2-phosphoglycerate and 3-phosphoglycerate. This is 2,3-bisphosphoglycerate-dependent phosphoglycerate mutase from Mycobacterium bovis (strain BCG / Pasteur 1173P2).